The following is a 142-amino-acid chain: MKSKRRKARELAIQVLYSWQISKKIVLFETEKYVIEQNKKYSLDKIYFHKIVTGVIKNIFYIDKIIKKNISKKKNRLDYIEQAILRLASYEIIKRLDIPYKVIINEGIELAKIYGSNKSHKFINSILDKIITNKNNIKIKNF.

The protein belongs to the NusB family.

Its function is as follows. Involved in transcription antitermination. Required for transcription of ribosomal RNA (rRNA) genes. Binds specifically to the boxA antiterminator sequence of the ribosomal RNA (rrn) operons. In Buchnera aphidicola subsp. Cinara cedri (strain Cc), this protein is Transcription antitermination protein NusB.